The primary structure comprises 329 residues: Ankyrin repeat and SOCS box protein 5 (329 aa).

ANK repeat units lie at residues 69 to 98 (ADRS…NVNA), 102 to 131 (DHVT…NVNA), 135 to 164 (DGVT…KPQL), 167 to 196 (CLPS…DVDQ), 200 to 229 (HLGT…DVQK), and 232 to 261 (YWDT…DINA). One can recognise an SOCS box domain in the interval 278–329 (LVERLLLQHEATPSSLCQLCRLCIRNYIGRPRLHLIPQLQLPTLLQNFLQYR).

Belongs to the ankyrin SOCS box (ASB) family.

The protein operates within protein modification; protein ubiquitination. May be a substrate-recognition component of a SCF-like ECS (Elongin-Cullin-SOCS-box protein) E3 ubiquitin-protein ligase complex which mediates the ubiquitination and subsequent proteasomal degradation of target proteins. May play a role in the initiation of arteriogenesis. The sequence is that of Ankyrin repeat and SOCS box protein 5 (ASB5) from Bos taurus (Bovine).